The primary structure comprises 520 residues: MAGGLMQLVAYGAQDVYLTGNPQITFWKVTYRRHTNFAMESIEQTFNGQADFGRRVTCTISRNGDLAYRTYLQITLPEIGQSLSSGAVYARWLDFPGEQLISQVEVEIGGQRIDRQYGDWMHIWNQLTLSKEQERGYFKMVGNTTQLTYVCDPNFAAIDGPCSANGVRQVCAPRDALPETTLYVPLQFWYCRNPGLALPLIALQYHEVKINLDIRNIEECLWAVSAIDGTGTKITDAYKQSLAAASLFVDYIFLDTDERRRMAQNPHEYLIEQLQFTGDESVGSSSNKIKLNLNHPCKELIWVVQPDANVDYCSSLTASTHLNNLLGAQPFNYTDAFDALPNAVHAFGGQASASGANAVINASGLFEDPFSNDIQSSVLDSGAATGADSGVSDAGTFVLAETALDMHCWGENPVIVAKLQLNGQDRFSEREGTYFDLVQPYQHHTRAPDSGINVYSFALHPEEHQPSGTCNFSRIDNATLQLVLSNATVQGVNTAKVRVYAVNYNVLRIMSGMGGLAYSN.

This sequence belongs to the NCLDV major capsid protein family.

The protein localises to the virion. Major capsid protein that self assembles to form an icosahedral capsid with a T=219 symmetry. This Phaeocystis pouchetii (PpV01) protein is Major capsid protein (MCP).